The sequence spans 450 residues: Bestrophin homolog 1 (450 aa).

Residues 1–31 lie on the Cytoplasmic side of the membrane; the sequence is MTINYHKEIMTSHPWTFFLLLFKWKGSIWKA. A helical transmembrane segment spans residues 32 to 51; that stretch reads VYMETIIFLICYGIISVIYK. Residues 52–60 are Extracellular-facing; the sequence is TAMGESSQR. Residues 61–82 form a helical membrane-spanning segment; it reads TFESLVRYFDKRLSYIPLEFVL. Over 83–242 the chain is Cytoplasmic; sequence GFFVTTVVNR…DWVPLPLMYP (160 aa). The chain crosses the membrane as a helical span at residues 243-260; it reads QLVCLAVNLYFLVSIIAR. Topologically, residues 261–278 are extracellular; the sequence is QLVIEKHKMVDEVDVYFP. A helical membrane pass occupies residues 279 to 292; sequence VMTFLQFIFYMGWL. At 293–450 the chain is on the cytoplasmic side; the sequence is KVIDVMLNPF…WKIPTNPQKF (158 aa). Residues N300, D305, and D308 each contribute to the Ca(2+) site.

Belongs to the anion channel-forming bestrophin (TC 1.A.46) family. Calcium-sensitive chloride channel subfamily. Forms oligomers.

It localises to the cell membrane. The enzyme catalyses chloride(in) = chloride(out). Functionally, ligand-gated anion channel that allows the movement of chloride monoatomic anions across cell membranes when activated by Calcium (Ca2+). In Caenorhabditis elegans, this protein is Bestrophin homolog 1 (best-1).